We begin with the raw amino-acid sequence, 512 residues long: Histidine ammonia-lyase (512 aa).

A cross-link (5-imidazolinone (Ala-Gly)) is located at residues 142–144; sequence ASG. The residue at position 143 (Ser143) is a 2,3-didehydroalanine (Ser).

Belongs to the PAL/histidase family. Post-translationally, contains an active site 4-methylidene-imidazol-5-one (MIO), which is formed autocatalytically by cyclization and dehydration of residues Ala-Ser-Gly.

Its subcellular location is the cytoplasm. The catalysed reaction is L-histidine = trans-urocanate + NH4(+). Its pathway is amino-acid degradation; L-histidine degradation into L-glutamate; N-formimidoyl-L-glutamate from L-histidine: step 1/3. The chain is Histidine ammonia-lyase from Bartonella tribocorum (strain CIP 105476 / IBS 506).